The sequence spans 287 residues: MAAKIIDGKTIAQQVKDEVAARVTQRLAEGKRAPGLAVVLVGDNPASQIYVTSKRKVCEEVGFISRSYDLPITTTESELLALIDQLNADQAIDGILVQLPLPEGIDNTKVIERIAPDKDVDGFHPYNVGRLCQRAPLLRACTPRGIITLLERYNIDTFGLNAVVVGASNIVGRPMSLELLLAGCTTTVTHRFTKNLRHHIENADLLVVAVGKPGFIPGEWIKPGAIVLDVGINRLESGKVVGDIEFETAQERASYISPVPGGVGPMTVATLIQNTLQACEEYHDHAE.

NADP(+) contacts are provided by residues 166–168 (GAS) and Ile232.

Belongs to the tetrahydrofolate dehydrogenase/cyclohydrolase family. As to quaternary structure, homodimer.

It catalyses the reaction (6R)-5,10-methylene-5,6,7,8-tetrahydrofolate + NADP(+) = (6R)-5,10-methenyltetrahydrofolate + NADPH. It carries out the reaction (6R)-5,10-methenyltetrahydrofolate + H2O = (6R)-10-formyltetrahydrofolate + H(+). It functions in the pathway one-carbon metabolism; tetrahydrofolate interconversion. In terms of biological role, catalyzes the oxidation of 5,10-methylenetetrahydrofolate to 5,10-methenyltetrahydrofolate and then the hydrolysis of 5,10-methenyltetrahydrofolate to 10-formyltetrahydrofolate. The protein is Bifunctional protein FolD of Pectobacterium atrosepticum (strain SCRI 1043 / ATCC BAA-672) (Erwinia carotovora subsp. atroseptica).